The primary structure comprises 993 residues: Serine/threonine-protein phosphatase 6 regulatory ankyrin repeat subunit B (993 aa).

ANK repeat units lie at residues 7-36 (TDQPPLVQAIFSGDPEEIRMLIHKTEDVNT), 40-69 (EKRTPLHVAAFLGDAEIIELLILSGARVNA), 73-102 (MWLTPLHRAVASRSEEAVQVLIKHSADVNA), 106-135 (NWQTPLHVAAANKAVKCAEVIIPLLSSVNV), 139-168 (GGRTALHHAALNGHVEMVNLLLAKGANINA), 172-201 (KDRRALHWAAYMGHLDVVALLINHGAEVTC), 205-234 (KGYTPLHAAASNGQINVVKHLLNLGVEIDE), 238-267 (YGNTALHIACYNGQDAVVNELIDYGANVNQ), 271-301 (NGFTPLHFAAASTHGALCLELLVNNGADVNI), 305-334 (DGKSPLHMTAVHGRFTRSQTLIQNGGEIDC), 338-367 (DGNTPLHVAARYGHELLINTLITSGADTAK), 371-400 (HSMFPLHLAALNAHSDCCRKLLSSGFEIDT), 404-433 (FGRTCLHAAAAGGNVECIKLLQSSGADFHK), 437-466 (CGRTPLHYAAANCHFHCIETLVTTGANVNE), 470-498 (WGRTALHYAAASDMDRNKTILGNAHDNSE), 531-561 (EGYNSIHYAAAYGHRQCLELLLERTNSGFEE), 566-595 (ATKSPLHLAAYNGHHQALEVLLQSLVDLDI), 599-628 (KGRTALDLAAFKGHTECVEALINQGASIFV), 633-662 (TKRTPLHASVINGHTLCLRLLLEIADNPEA), 669-698 (KGQTPLMLAVAYGHIDAVSLLLEKEANVDT), 702-731 (LGCTALHRGIMTGHEECVQMLLEQEVSILC), 735-764 (RGRTPLHYAAARGHATWLSELLQMALSEED), 771-800 (QGYTPLHWACYNGNENCIEVLLEQKCFRKF), 803-832 (NPFTPLHCAIINDHGNCASLLLGAIDSSIV), 838-867 (KGRTPLHAAAFADHVECLQLLLRHSAPVNA), 871-901 (SGKTALMMAAENGQAGAVDILVNSAQADLTV), 905-934 (DLNTPLHLACSKGHEKCALLILDKIQDESL), and 941-970 (ALQTPLHVAARNGLKVVVEELLAKGACVLA).

As to quaternary structure, protein phosphatase 6 (PP6) holoenzyme is proposed to be a heterotrimeric complex formed by the catalytic subunit, a SAPS domain-containing subunit (PP6R) and an ankyrin repeat-domain containing regulatory subunit (ARS). Interacts with PPP6R1.

Its function is as follows. Putative regulatory subunit of protein phosphatase 6 (PP6) that may be involved in the recognition of phosphoprotein substrates. The protein is Serine/threonine-protein phosphatase 6 regulatory ankyrin repeat subunit B (ANKRD44) of Homo sapiens (Human).